A 406-amino-acid chain; its full sequence is Homocitrate synthase AksA (406 aa).

The region spanning 32-285 (IYIYDTTLRD…DLGLNLEVLP (254 aa)) is the Pyruvate carboxyltransferase domain.

Belongs to the alpha-IPM synthase/homocitrate synthase family.

It carries out the reaction acetyl-CoA + 2-oxoglutarate + H2O = (2R)-homocitrate + CoA + H(+). The enzyme catalyses 2-oxoadipate + acetyl-CoA + H2O = (R)-dihomocitrate + CoA + H(+). It catalyses the reaction 2-oxoheptanedioate + acetyl-CoA + H2O = (R)-trihomocitrate + CoA + H(+). Its pathway is organic acid metabolism; 2-oxosuberate biosynthesis. Catalyzes the condensation of alpha-ketoglutarate and acetyl-CoA to form (R)-homocitrate. Can also catalyze the condensation of alpha-ketoadipate with acetyl-CoA to form (R)-homo(2)citrate, and the condensation of alpha-ketopimelate with acetyl-CoA to form (R)-homo(3)citrate. These reactions are part of the biosynthesis pathway of coenzyme B and biotin. This Methanocaldococcus jannaschii (strain ATCC 43067 / DSM 2661 / JAL-1 / JCM 10045 / NBRC 100440) (Methanococcus jannaschii) protein is Homocitrate synthase AksA (aksA).